We begin with the raw amino-acid sequence, 557 residues long: Autophagy-related protein 17 (557 aa).

Disordered regions lie at residues 1-25 (MSSS…TEQQ) and 204-227 (ASSR…SMSS). A compositionally biased stretch (low complexity) spans 205-227 (SSRSSSSPSSSSASNSSLPSMSS). Coiled-coil stretches lie at residues 334-355 (DRIG…ALRS) and 428-458 (RHVR…AREA). Positions 495–532 (AVSEQANDEEPTAGEREQRGGGQENHLSAVGDNTEVDE) are disordered.

This sequence belongs to the ATG17 family.

The protein localises to the cytoplasm. It is found in the preautophagosomal structure membrane. Autophagy-specific protein that functions in response to autophagy-inducing signals as a scaffold to recruit other ATG proteins to organize pre-autophagosomal structure (PAS) formation. Modulates the timing and magnitude of the autophagy response, such as the size of the sequestering vesicles. Plays particularly a role in pexophagy and nucleophagy. In Aspergillus clavatus (strain ATCC 1007 / CBS 513.65 / DSM 816 / NCTC 3887 / NRRL 1 / QM 1276 / 107), this protein is Autophagy-related protein 17 (atg17).